The chain runs to 207 residues: MTETDGQKDNNQDTAQAAADPVVSKPYIMPDDPEEGSNEALVREAADARDKMLRTLAEMENLRKRTQKEVADARTYGVTSFARDVLDIADNLQRALDAVPADARANAEPGLKALIEGVELTERSLLNALEKNGVKKFDPKGQKFDPNFQQAMYEVPDPSVPAGTVVQVVQAGFTIGDRVLRPALVGVAKGGAKAAPSDGGGETGNLN.

The segment covering 1–11 has biased composition (basic and acidic residues); sequence MTETDGQKDNN. Positions 1 to 40 are disordered; the sequence is MTETDGQKDNNQDTAQAAADPVVSKPYIMPDDPEEGSNEA.

Belongs to the GrpE family. In terms of assembly, homodimer.

The protein localises to the cytoplasm. Its function is as follows. Participates actively in the response to hyperosmotic and heat shock by preventing the aggregation of stress-denatured proteins, in association with DnaK and GrpE. It is the nucleotide exchange factor for DnaK and may function as a thermosensor. Unfolded proteins bind initially to DnaJ; upon interaction with the DnaJ-bound protein, DnaK hydrolyzes its bound ATP, resulting in the formation of a stable complex. GrpE releases ADP from DnaK; ATP binding to DnaK triggers the release of the substrate protein, thus completing the reaction cycle. Several rounds of ATP-dependent interactions between DnaJ, DnaK and GrpE are required for fully efficient folding. The chain is Protein GrpE from Rhodopseudomonas palustris (strain ATCC BAA-98 / CGA009).